We begin with the raw amino-acid sequence, 266 residues long: Zinc transporter ZupT (266 aa).

The next 8 membrane-spanning stretches (helical) occupy residues 8–28 (LALTLLAGISTGIGSLLALMV), 35–55 (FLTFALGFSAGIMLYVSFVEI), 70–90 (HAAGWITTAAFFGGMLFIWLI), 123–143 (GIFTAAAIAIHNFPEGLAVFF), 152–172 (GVVIAATIALHNIPEGMAVAV), 185–205 (FSYSFLSGLAEPLGAIIGYAL), 209–229 (FLSPLVFACVLGGVAGIMVYI), and 246–266 (IAISGLILGMGVMAVSLLMLA). Residues N134 and E137 each coordinate Fe(2+). Zn(2+) contacts are provided by E137 and H162. Residues N163, E166, and E195 each contribute to the Fe(2+) site. E166 serves as a coordination point for Zn(2+).

The protein belongs to the ZIP transporter (TC 2.A.5) family. ZupT subfamily.

The protein localises to the cell inner membrane. The enzyme catalyses Zn(2+)(in) = Zn(2+)(out). Mediates zinc uptake. May also transport other divalent cations. The chain is Zinc transporter ZupT from Chlorobium limicola (strain DSM 245 / NBRC 103803 / 6330).